Reading from the N-terminus, the 198-residue chain is Transmembrane protein 17 (198 aa).

An N-linked (GlcNAc...) asparagine glycan is attached at Asn-13. Transmembrane regions (helical) follow at residues 47–67 (LYFN…MLHL), 78–98 (FIVI…LYLG), 110–130 (LAGF…FLLL), and 142–162 (AIHS…FLTL).

Belongs to the TMEM17 family. Part of the tectonic-like complex (also named B9 complex).

It is found in the cell projection. The protein localises to the cilium membrane. Its function is as follows. Transmembrane component of the tectonic-like complex, a complex localized at the transition zone of primary cilia and acting as a barrier that prevents diffusion of transmembrane proteins between the cilia and plasma membranes. Required for ciliogenesis and sonic hedgehog/SHH signaling. This chain is Transmembrane protein 17 (Tmem17), found in Rattus norvegicus (Rat).